Here is a 291-residue protein sequence, read N- to C-terminus: ATP synthase gamma chain (291 aa).

This sequence belongs to the ATPase gamma chain family. In terms of assembly, F-type ATPases have 2 components, CF(1) - the catalytic core - and CF(0) - the membrane proton channel. CF(1) has five subunits: alpha(3), beta(3), gamma(1), delta(1), epsilon(1). CF(0) has three main subunits: a, b and c.

The protein resides in the cell inner membrane. In terms of biological role, produces ATP from ADP in the presence of a proton gradient across the membrane. The gamma chain is believed to be important in regulating ATPase activity and the flow of protons through the CF(0) complex. The sequence is that of ATP synthase gamma chain from Neisseria meningitidis serogroup A / serotype 4A (strain DSM 15465 / Z2491).